The sequence spans 157 residues: MRIGHGYDVHRLVAGRKLIVGGVDIPHELGLLGHSDADVLLHAISDAILGALALGDIGKHFPDTDPRYKGADSRALLRHVMELATRKGFHLGNLDATIVAQRPKMAPHIPLMREHIAADLMADPDRVNVKATTTEELGFAGRGEGIAAYAVVLMEEK.

The a divalent metal cation site is built by Asp-8 and His-10. Residues 8–10 (DVH) and 34–35 (HS) each bind 4-CDP-2-C-methyl-D-erythritol 2-phosphate. His-42 is an a divalent metal cation binding site. 4-CDP-2-C-methyl-D-erythritol 2-phosphate is bound by residues 56–58 (DIG), 61–65 (FPDTD), 100–106 (AQRPKMA), 132–135 (TTTE), Phe-139, and Arg-142.

It belongs to the IspF family. Homotrimer. A divalent metal cation is required as a cofactor.

It catalyses the reaction 4-CDP-2-C-methyl-D-erythritol 2-phosphate = 2-C-methyl-D-erythritol 2,4-cyclic diphosphate + CMP. It functions in the pathway isoprenoid biosynthesis; isopentenyl diphosphate biosynthesis via DXP pathway; isopentenyl diphosphate from 1-deoxy-D-xylulose 5-phosphate: step 4/6. Its function is as follows. Involved in the biosynthesis of isopentenyl diphosphate (IPP) and dimethylallyl diphosphate (DMAPP), two major building blocks of isoprenoid compounds. Catalyzes the conversion of 4-diphosphocytidyl-2-C-methyl-D-erythritol 2-phosphate (CDP-ME2P) to 2-C-methyl-D-erythritol 2,4-cyclodiphosphate (ME-CPP) with a corresponding release of cytidine 5-monophosphate (CMP). The polypeptide is 2-C-methyl-D-erythritol 2,4-cyclodiphosphate synthase (Geobacter sulfurreducens (strain ATCC 51573 / DSM 12127 / PCA)).